The primary structure comprises 309 residues: Glutamyl-Q tRNA(Asp) synthetase (309 aa).

L-glutamate is bound by residues 8-12 and E44; that span reads RFSPS. Residues 11 to 21 carry the 'HIGH' region motif; it reads PSPTGPLHAGS. The Zn(2+) site is built by C100, C102, Y126, and C130. L-glutamate contacts are provided by Y205 and R223. The 'KMSKS' region signature appears at 261 to 265; it reads KLSKQ. K264 is a binding site for ATP.

The protein belongs to the class-I aminoacyl-tRNA synthetase family. GluQ subfamily. It depends on Zn(2+) as a cofactor.

Catalyzes the tRNA-independent activation of glutamate in presence of ATP and the subsequent transfer of glutamate onto a tRNA(Asp). Glutamate is transferred on the 2-amino-5-(4,5-dihydroxy-2-cyclopenten-1-yl) moiety of the queuosine in the wobble position of the QUC anticodon. The sequence is that of Glutamyl-Q tRNA(Asp) synthetase from Albidiferax ferrireducens (strain ATCC BAA-621 / DSM 15236 / T118) (Rhodoferax ferrireducens).